Consider the following 340-residue polypeptide: Phenylalanine--tRNA ligase alpha subunit (340 aa).

Glu255 is a binding site for Mg(2+).

The protein belongs to the class-II aminoacyl-tRNA synthetase family. Phe-tRNA synthetase alpha subunit type 1 subfamily. In terms of assembly, tetramer of two alpha and two beta subunits. The cofactor is Mg(2+).

It localises to the cytoplasm. The enzyme catalyses tRNA(Phe) + L-phenylalanine + ATP = L-phenylalanyl-tRNA(Phe) + AMP + diphosphate + H(+). The polypeptide is Phenylalanine--tRNA ligase alpha subunit (Exiguobacterium sp. (strain ATCC BAA-1283 / AT1b)).